Here is a 445-residue protein sequence, read N- to C-terminus: Xylose isomerase (445 aa).

Residues His107 and Asp110 contribute to the active site. Mg(2+) is bound by residues Glu238, Glu274, His277, Asp302, Asp313, Asp315, and Asp345.

It belongs to the xylose isomerase family. In terms of assembly, homotetramer. The cofactor is Mg(2+).

The protein localises to the cytoplasm. The enzyme catalyses alpha-D-xylose = alpha-D-xylulofuranose. This chain is Xylose isomerase (xylA), found in Bacillus subtilis (strain 168).